A 485-amino-acid polypeptide reads, in one-letter code: Ribulose bisphosphate carboxylase large chain (485 aa).

Substrate is bound by residues Asn-124 and Thr-174. Lys-176 acts as the Proton acceptor in catalysis. Residue Lys-178 coordinates substrate. Residues Lys-202, Asp-204, and Glu-205 each coordinate Mg(2+). Lys-202 is modified (N6-carboxylysine). The active-site Proton acceptor is His-294. The substrate site is built by Arg-295, His-327, and Ser-379.

Belongs to the RuBisCO large chain family. Type I subfamily. Heterohexadecamer of 8 large chains and 8 small chains. Mg(2+) serves as cofactor.

The enzyme catalyses 2 (2R)-3-phosphoglycerate + 2 H(+) = D-ribulose 1,5-bisphosphate + CO2 + H2O. It catalyses the reaction D-ribulose 1,5-bisphosphate + O2 = 2-phosphoglycolate + (2R)-3-phosphoglycerate + 2 H(+). In terms of biological role, ruBisCO catalyzes two reactions: the carboxylation of D-ribulose 1,5-bisphosphate, the primary event in carbon dioxide fixation, as well as the oxidative fragmentation of the pentose substrate. Both reactions occur simultaneously and in competition at the same active site. The protein is Ribulose bisphosphate carboxylase large chain of Rhodopseudomonas palustris (strain TIE-1).